We begin with the raw amino-acid sequence, 267 residues long: Cilia- and flagella-associated protein 300 (267 aa).

This sequence belongs to the CFAP300 family. As to quaternary structure, interacts with DNAAF2. In terms of tissue distribution, expressed in the left-right organiser (LRO) node at 8.25 dpc.

It is found in the cytoplasm. Its subcellular location is the cytoskeleton. The protein resides in the cilium axoneme. In terms of biological role, cilium- and flagellum-specific protein that plays a role in axonemal structure organization and motility. May play a role in outer and inner dynein arm assembly. The chain is Cilia- and flagella-associated protein 300 from Mus musculus (Mouse).